We begin with the raw amino-acid sequence, 333 residues long: MADQDGDKSGYRQINKALNICAFDDYLKGQRAHLPQIPAVEQLTPRVLRVLGQNAGKFTLQGTNTFIVGKGRDRIIVDTSGGEEEWIELIQETLLDRGINITHVLLTHWHGDHTGGVPDLIRLYPHLKDHIYKNEPERDQQAIQDGQIFAVQGATIRALHAPGHSTDHMCFILEEEHAMFTGDNILGHGTSAVEDLGTFMASLQTMADQNCKTGYSAHGVTIDNLPIKISAELTKLLRREKQVLSALAQFRKRGERCAALRDIVTEIYGQALEEDTRRLALEPFIDEVLRKLAGDGRVAFQKRGGLKKWYSLEMEMAVDAKAAQVAQARAIAV.

His108, His110, Asp112, and His113 together coordinate Zn(2+). Catalysis depends on Asp112, which acts as the Proton donor/acceptor.

This sequence belongs to the metallo-beta-lactamase superfamily. It depends on Zn(2+) as a cofactor.

The enzyme catalyses atrochrysone carboxyl-[ACP] + H2O = atrochrysone carboxylate + holo-[ACP] + H(+). It functions in the pathway secondary metabolite biosynthesis. In terms of biological role, atrochrysone carboxyl ACP thioesterase; part of the gene cluster that mediates the biosynthesis of an emodin derivative that may be involved in black Sigatoka disease of banana. The pathway begins with the synthesis of atrochrysone thioester by the polyketide synthase PKS8-1. The atrochrysone carboxyl ACP thioesterase MYCFIDRAFT_190111 then breaks the thioester bond and releases the atrochrysone carboxylic acid from PKS8-1. The decarboxylase MYCFIDRAFT_34057 then catalyzes the concerted decarboxylation-elimination required to convert atochrysone carboxylic acid into emodin anthrone, which is further oxidized to emodin by the anthrone oxygenase MYCFIDRAFT_34418. The functions of the other tailoring enzymes as well as the final product of the cluster have still to be identified. This Pseudocercospora fijiensis (strain CIRAD86) (Black leaf streak disease fungus) protein is Atrochrysone carboxyl ACP thioesterase MYCFIDRAFT_190111.